A 448-amino-acid chain; its full sequence is UDP-N-acetylmuramoylalanine--D-glutamate ligase (448 aa).

116-122 (GSNAKST) serves as a coordination point for ATP.

Belongs to the MurCDEF family.

The protein resides in the cytoplasm. The catalysed reaction is UDP-N-acetyl-alpha-D-muramoyl-L-alanine + D-glutamate + ATP = UDP-N-acetyl-alpha-D-muramoyl-L-alanyl-D-glutamate + ADP + phosphate + H(+). It functions in the pathway cell wall biogenesis; peptidoglycan biosynthesis. Cell wall formation. Catalyzes the addition of glutamate to the nucleotide precursor UDP-N-acetylmuramoyl-L-alanine (UMA). The chain is UDP-N-acetylmuramoylalanine--D-glutamate ligase from Pseudomonas fluorescens (strain ATCC BAA-477 / NRRL B-23932 / Pf-5).